We begin with the raw amino-acid sequence, 558 residues long: MELRARGWWLLCAAAALVACTRGDPASKSRSCSEVRQIYGAKGFSLSDVPQAEISGEHLRICPQGYTCCTSEMEENLANHSRMELETALHDSSRALQATLATQLHGIDDHFQRLLNDSERTLQDAFPGAFGDLYTQNTRAFRDLYAELRLYYRGANLHLEETLAEFWARLLERLFKQLHPQLLLPDDYLDCLGKQAEALRPFGDAPRELRLRATRAFVAARSFVQGLGVASDVVRKVAQVPLAPECSRAVMKLVYCAHCRGVPGARPCPDYCRNVLKGCLANQADLDAEWRNLLDSMVLITDKFWGPSGAEYVIGSVHMWLAEAINALQDNKDTLTAKVIQGCGNPKVNPHGSGPEEKRRRAKLALQEKSSTGTLEKLVSEAKAQLRDIQDYWISLPGTLCSEKMAMSPASDDRCWNGISKGRYLPEVMGDGLANQINNPEVEVDITKPDMTIRQQIMQLKIMTNRLRGAYGGNDVDFQDASDDGSGSGSGGGCPDDACGRRVSKKSSSSRTPLIHALPGLSEQEGQKTSAATRPEPHYFFLLFLFTLVLAAARPRWR.

An N-terminal signal peptide occupies residues M1–G23. 7 disulfides stabilise this stretch: C32–C68, C62–C256, C69–C259, C191–C343, C246–C279, C268–C415, and C272–C401. 2 N-linked (GlcNAc...) asparagine glycosylation sites follow: N79 and N116. The tract at residues F478–A531 is disordered. 3 O-linked (Xyl...) (heparan sulfate) serine glycosylation sites follow: S486, S488, and S490. The GPI-anchor amidated serine moiety is linked to residue S530. The propeptide at A531–R558 is removed in mature form.

The protein belongs to the glypican family. S-nitrosylated in a Cu(2+)-dependent manner. Nitric acid (NO) is released from the nitrosylated cysteines by ascorbate or by some other reducing agent, in a Cu(2+) or Zn(2+) dependent manner. This free nitric oxide is then capable of cleaving the heparan sulfate side chains. In terms of processing, N- and O-glycosylated. N-glycosylation is mainly of the complex type containing sialic acid. O-glycosylated with heparan sulfate. The heparan sulfate chains can be cleaved either by the action of heparanase or, degraded by a deaminative process that uses nitric oxide (NO) released from the S-nitrosylated cysteines. This process is triggered by ascorbate, or by some other reducing agent, in a Cu(2+)- or Zn(2+) dependent manner. Cu(2+) ions are provided by ceruloproteins such as APP, PRNP or CP which associate with GCP1 in intracellular compartments or lipid rafts. Post-translationally, this cell-associated glypican is further processed to give rise to a medium-released species. In terms of tissue distribution, nervous system.

The protein localises to the cell membrane. Its subcellular location is the endosome. It localises to the secreted. It is found in the extracellular space. Its function is as follows. Cell surface proteoglycan that bears heparan sulfate. May act as a catalyst in increasing the rate of conversion of prion protein PRPN(C) to PRNP(Sc) via associating (via the heparan sulfate side chains) with both forms of PRPN, targeting them to lipid rafts and facilitating their interaction. Required for proper skeletal muscle differentiation by sequestering FGF2 in lipid rafts preventing its binding to receptors (FGFRs) and inhibiting the FGF-mediated signaling. Binds Cu(2+) or Zn(2+) ions. Binds, via the heparan sulfate side chains, alpha-4 (V) collagen and participates in Schwann cell myelination. The polypeptide is Glypican-1 (Gpc1) (Rattus norvegicus (Rat)).